Consider the following 347-residue polypeptide: Eukaryotic translation initiation factor 3 subunit I (347 aa).

WD repeat units lie at residues 8–47, 50–89, 91–135, 151–190, 193–232, and 290–329; these read GHER…RLGT, GHTG…VIHT, TAPV…VTKE, ENHK…FITS, LHTQ…QLKS, and GHFG…FDFK.

It belongs to the eIF-3 subunit I family. Component of the eukaryotic translation initiation factor 3 (eIF-3) complex.

Its subcellular location is the cytoplasm. Component of the eukaryotic translation initiation factor 3 (eIF-3) complex, which is involved in protein synthesis of a specialized repertoire of mRNAs and, together with other initiation factors, stimulates binding of mRNA and methionyl-tRNAi to the 40S ribosome. The eIF-3 complex specifically targets and initiates translation of a subset of mRNAs involved in cell proliferation. This Vanderwaltozyma polyspora (strain ATCC 22028 / DSM 70294 / BCRC 21397 / CBS 2163 / NBRC 10782 / NRRL Y-8283 / UCD 57-17) (Kluyveromyces polysporus) protein is Eukaryotic translation initiation factor 3 subunit I.